A 260-amino-acid polypeptide reads, in one-letter code: Neurotrophin-3 (260 aa).

A signal peptide spans 1–18 (MSILFYVMFLPYLCGIHA). The propeptide occupies 19–141 (TNMDKRNLPE…VNNRTSRRKR (123 aa)). N-linked (GlcNAc...) asparagine glycosylation occurs at N134. Intrachain disulfides connect C155/C220, C198/C249, and C208/C251.

Belongs to the NGF-beta family.

It localises to the secreted. Seems to promote the survival of visceral and proprioceptive sensory neurons. The chain is Neurotrophin-3 (ntf3) from Xenopus laevis (African clawed frog).